The chain runs to 104 residues: Phosphoribosyl-ATP pyrophosphatase (104 aa).

This sequence belongs to the PRA-PH family.

Its subcellular location is the cytoplasm. It carries out the reaction 1-(5-phospho-beta-D-ribosyl)-ATP + H2O = 1-(5-phospho-beta-D-ribosyl)-5'-AMP + diphosphate + H(+). It participates in amino-acid biosynthesis; L-histidine biosynthesis; L-histidine from 5-phospho-alpha-D-ribose 1-diphosphate: step 2/9. In Methanosarcina acetivorans (strain ATCC 35395 / DSM 2834 / JCM 12185 / C2A), this protein is Phosphoribosyl-ATP pyrophosphatase (hisE).